The sequence spans 75 residues: UPF0352 protein YejL (75 aa).

Belongs to the UPF0352 family.

In Shigella sonnei (strain Ss046), this protein is UPF0352 protein YejL.